Reading from the N-terminus, the 71-residue chain is Protein KleB (71 aa).

The segment at residues 9-28 (VTTNCRRCGKSISTLSRSLI) is a DNA-binding region (H-T-H motif).

In Escherichia coli, this protein is Protein KleB (kleB).